A 359-amino-acid polypeptide reads, in one-letter code: Protein FLX-like 2 (359 aa).

A compositionally biased stretch (basic residues) spans Met1 to Arg16. Residues Met1–His27 are disordered. The stretch at His83 to Asn236 forms a coiled coil. Residues Thr303–Arg359 are disordered.

It belongs to the FLX family. Interacts with FRI.

In terms of biological role, has no transcriptional activation activity. This is Protein FLX-like 2 (FLXL2) from Arabidopsis thaliana (Mouse-ear cress).